A 98-amino-acid chain; its full sequence is Keratin-associated protein 3-1 (98 aa).

Residue alanine 2 is modified to N-acetylalanine. 4 tandem repeats follow at residues 3-7 (CCAPR), 8-12 (CCSVR), 47-51 (FCDNS), and 55-59 (YHVPD). Residues 3-59 (CCAPRCCSVRTGPATTICSSDQFCRCGVCLPSTCPHDISLLQPTFCDNSPVPYHVPD) form a 4 X 5 AA repeats of C-C-X(3) region.

It belongs to the KRTAP type 3 family. As to quaternary structure, interacts with wool keratins. As to expression, wool.

Functionally, in the wool cortex, wool keratin intermediate filaments are embedded in an interfilamentous matrix, consisting of hair keratin-associated proteins (KRTAP), which are essential for the formation of a rigid and resistant wool shaft through their extensive disulfide bond cross-linking with abundant cysteine residues of wool keratins. The matrix proteins include the high-sulfur and high-glycine-tyrosine keratins. In Capra hircus (Goat), this protein is Keratin-associated protein 3-1 (KRTAP3-1).